Here is a 220-residue protein sequence, read N- to C-terminus: Cytidylate kinase (220 aa).

9-17 contributes to the ATP binding site; it reads GPAASGKST.

The protein belongs to the cytidylate kinase family. Type 1 subfamily.

Its subcellular location is the cytoplasm. It catalyses the reaction CMP + ATP = CDP + ADP. The catalysed reaction is dCMP + ATP = dCDP + ADP. The protein is Cytidylate kinase of Thermotoga neapolitana (strain ATCC 49049 / DSM 4359 / NBRC 107923 / NS-E).